We begin with the raw amino-acid sequence, 325 residues long: ATP phosphoribosyltransferase (325 aa).

This sequence belongs to the ATP phosphoribosyltransferase family. Long subfamily. It depends on Mg(2+) as a cofactor.

The protein localises to the cytoplasm. It catalyses the reaction 1-(5-phospho-beta-D-ribosyl)-ATP + diphosphate = 5-phospho-alpha-D-ribose 1-diphosphate + ATP. It participates in amino-acid biosynthesis; L-histidine biosynthesis; L-histidine from 5-phospho-alpha-D-ribose 1-diphosphate: step 1/9. Feedback inhibited by histidine. Catalyzes the condensation of ATP and 5-phosphoribose 1-diphosphate to form N'-(5'-phosphoribosyl)-ATP (PR-ATP). Has a crucial role in the pathway because the rate of histidine biosynthesis seems to be controlled primarily by regulation of HisG enzymatic activity. The chain is ATP phosphoribosyltransferase from Rhodopseudomonas palustris (strain BisB18).